Here is a 329-residue protein sequence, read N- to C-terminus: NADH-quinone oxidoreductase subunit H (329 aa).

A run of 9 helical transmembrane segments spans residues 9 to 29 (LIKI…ATYI), 42 to 62 (GPCY…IKLF), 75 to 95 (FIFT…MAPI), 117 to 137 (IGFL…ILAG), 154 to 174 (IQLL…LMVV), 188 to 208 (GGFL…FLIA), 238 to 258 (LKWG…SFVI), 269 to 291 (WGFI…LSMW), and 309 to 329 (WKIM…IILI).

Belongs to the complex I subunit 1 family. As to quaternary structure, NDH-1 is composed of 14 different subunits. Subunits NuoA, H, J, K, L, M, N constitute the membrane sector of the complex.

It is found in the cell inner membrane. It catalyses the reaction a quinone + NADH + 5 H(+)(in) = a quinol + NAD(+) + 4 H(+)(out). Functionally, NDH-1 shuttles electrons from NADH, via FMN and iron-sulfur (Fe-S) centers, to quinones in the respiratory chain. The immediate electron acceptor for the enzyme in this species is believed to be ubiquinone. Couples the redox reaction to proton translocation (for every two electrons transferred, four hydrogen ions are translocated across the cytoplasmic membrane), and thus conserves the redox energy in a proton gradient. This subunit may bind ubiquinone. In Helicobacter pylori (strain HPAG1), this protein is NADH-quinone oxidoreductase subunit H.